The chain runs to 307 residues: Ribonuclease Z (307 aa).

Positions 63, 65, 67, 68, 141, 212, and 270 each coordinate Zn(2+). D67 serves as the catalytic Proton acceptor.

The protein belongs to the RNase Z family. As to quaternary structure, homodimer. Requires Zn(2+) as cofactor.

The catalysed reaction is Endonucleolytic cleavage of RNA, removing extra 3' nucleotides from tRNA precursor, generating 3' termini of tRNAs. A 3'-hydroxy group is left at the tRNA terminus and a 5'-phosphoryl group is left at the trailer molecule.. Functionally, zinc phosphodiesterase, which displays some tRNA 3'-processing endonuclease activity. Probably involved in tRNA maturation, by removing a 3'-trailer from precursor tRNA. The sequence is that of Ribonuclease Z from Bacillus cereus (strain ATCC 14579 / DSM 31 / CCUG 7414 / JCM 2152 / NBRC 15305 / NCIMB 9373 / NCTC 2599 / NRRL B-3711).